Here is a 4065-residue protein sequence, read N- to C-terminus: Polyketide synthase-nonribosomal peptide synthetase pyiS (4065 aa).

The region spanning 6–440 (SEPVAIIGTG…GANCHAILEA (435 aa)) is the Ketosynthase family 3 (KS3) domain. Catalysis depends on for beta-ketoacyl synthase activity residues Cys-179, His-314, and His-360. An acyl transferase region spans residues 552 to 875 (IFTGQGAQWP…PYTGVLSRGK (324 aa)). Residues 950-1087 (NELLGRQILD…CDVLVTYGDS (138 aa)) are N-terminal hotdog fold. One can recognise a PKS/mFAS DH domain in the interval 950–1260 (NELLGRQILD…TQPLFNPTEA (311 aa)). The dehydratase (DH) domain stretch occupies residues 951–1254 (ELLGRQILDG…QVEGLQTQPL (304 aa)). The active-site Proton acceptor; for dehydratase activity is the His-982. Residues 1102 to 1260 (EYFMLGVESD…TQPLFNPTEA (159 aa)) form a C-terminal hotdog fold region. Asp-1166 functions as the Proton donor; for dehydratase activity in the catalytic mechanism. Positions 1409–1593 (AHGMPRYTKY…KQTGFSGIDT (185 aa)) are methyltransferase (MT) domain. Residues 2129 to 2302 (TYWLVGLSGT…NASVVHIGAI (174 aa)) form a ketoreductase (KR)domain region. Residues 2411–2492 (INSAEVYEII…EILETAQQLL (82 aa)) enclose the Carrier 1 domain. Ser-2452 is modified (O-(pantetheine 4'-phosphoryl)serine). Residues 2497–2561 (LPKMDPNDKS…GAKKGETVSK (65 aa)) form a disordered region. Over residues 2551-2561 (SGAKKGETVSK) the composition is skewed to basic and acidic residues. Residues 2645–3076 (SKKTPISFAQ…FSRNQALRLA (432 aa)) are condensation. The adenylation stretch occupies residues 3112-3516 (DIAKQKSHSL…RLLLEGRIAD (405 aa)). Positions 3634–3714 (QDLNDTESRL…DMAALVDELS (81 aa)) constitute a Carrier 2 domain. Ser-3674 carries the O-(pantetheine 4'-phosphoryl)serine modification. The reductase-like stretch occupies residues 3760–3975 (LTGSTGFLGR…LDFISVDEAA (216 aa)).

The protein belongs to the NRP synthetase family.

The protein operates within mycotoxin biosynthesis. In terms of biological role, hybrid PKS-NRPS synthetase; part of the gene cluster that mediates the biosynthesis of the mycotoxin pyrichalasin H, a tyrosine-derived cytochalasan that inhibits the growth of rice seedlings, but also inhibits lymphocyte capping and actin polymerization and alters cell morphology. Pyrichalasin H is indicated as the responsible agent for the genus-specific pathogenicity of M.grisea toward crabgrass. The first step in the pathway is catalyzed by the O-methyltransferase pyiA which methylates free tyrosine to generate the precursor O-methyltyrosine. The hybrid PKS-NRPS pyiS, assisted by the enoyl reductase pyiC, are responsible for fusion of the O-methyltyrosine precursor and the polyketide backbone. The polyketide synthase module (PKS) of pyiS is responsible for the synthesis of the polyketide backbone and the downstream nonribosomal peptide synthetase (NRPS) amidates the carboxyl end of the polyketide with the O-methyltyrosine precursor. As the NRPS A-domain demonstrates substrate tolerance, pyiS can also use phenylalanine, tyrosine and even para-chlorophenylalanine as amino acid precursor, which leads to the production of novel cytochalasans, including halogenated cytochalasans. Because pyiS lacks a designated enoylreductase (ER) domain, the required activity is provided the enoyl reductase pyiC. Reduction by the hydrolyase pyiE leads to 1,5-dihydropyrrolone, which is substrate for dehydration and intra-molecular Diels-Alder cyclization by the Diels-Alderase pyiF to yield the required isoindolone-fused macrocycle. The tailoring cytochrome P450 monooxygenases piyD and piyG catalyze the hydroxylation at C-18 and C-7, respectivily, whereas the short-chain dehydrogenase/reductase pyiH reduces the carbonyl at C-21 in preparation for the transfer of an acetyl group by the acetyltransferase pyiB. These 3 reactions whose order is not clear yet, lead to the production of O-methylpyrichalasin J, a deacetylated pyrichalasin H. Finally, pyiB to converts O-methylpyrichalasin J into the final product pyrichalasin H via acetylation of C-21. This chain is Polyketide synthase-nonribosomal peptide synthetase pyiS, found in Pyricularia grisea (Crabgrass-specific blast fungus).